A 106-amino-acid polypeptide reads, in one-letter code: MALAARRKVRIRLYGTNPADVDQVAREIVDLAKKMGVQVRGPIPLPTRRLVVTVRRAPSGQGYHTYDHWEMRISKRLIDIEASERVLRRLMTIRVPDTVKIELQLI.

Belongs to the universal ribosomal protein uS10 family. As to quaternary structure, part of the 30S ribosomal subunit.

Involved in the binding of tRNA to the ribosomes. In Pyrobaculum arsenaticum (strain DSM 13514 / JCM 11321 / PZ6), this protein is Small ribosomal subunit protein uS10.